The sequence spans 410 residues: Probable peptidoglycan glycosyltransferase FtsW (410 aa).

Helical transmembrane passes span 39-59, 78-98, 108-128, 177-197, 198-218, 221-241, 303-323, 342-362, and 374-394; these read LDPLLIWSATGLLLIGLVMVY, YFLLRHAMFLAVGIGAGLAAF, FAPWLFLIGVMLLVVVLIPGV, GFLPMAAMILLVGFLLLGEPD, FGAFVVITAIAFGVLFLGGIN, VFALLALVAVIGFMLLIWLSP, IAEELGFAGVLTVIALFAILI, GLVAMGIGLWLGVQSFINMGV, and LPLMSFGGSGIVANCLALAIL.

Belongs to the SEDS family. FtsW subfamily.

The protein localises to the cell inner membrane. The enzyme catalyses [GlcNAc-(1-&gt;4)-Mur2Ac(oyl-L-Ala-gamma-D-Glu-L-Lys-D-Ala-D-Ala)](n)-di-trans,octa-cis-undecaprenyl diphosphate + beta-D-GlcNAc-(1-&gt;4)-Mur2Ac(oyl-L-Ala-gamma-D-Glu-L-Lys-D-Ala-D-Ala)-di-trans,octa-cis-undecaprenyl diphosphate = [GlcNAc-(1-&gt;4)-Mur2Ac(oyl-L-Ala-gamma-D-Glu-L-Lys-D-Ala-D-Ala)](n+1)-di-trans,octa-cis-undecaprenyl diphosphate + di-trans,octa-cis-undecaprenyl diphosphate + H(+). Its pathway is cell wall biogenesis; peptidoglycan biosynthesis. Functionally, peptidoglycan polymerase that is essential for cell division. The polypeptide is Probable peptidoglycan glycosyltransferase FtsW (Aromatoleum aromaticum (strain DSM 19018 / LMG 30748 / EbN1) (Azoarcus sp. (strain EbN1))).